A 270-amino-acid chain; its full sequence is 4-hydroxy-tetrahydrodipicolinate reductase (270 aa).

NAD(+)-binding positions include 9–14 (GAGGRM) and E35. An NADP(+)-binding site is contributed by R36. Residues 99–101 (GTT) and 123–126 (ASNY) each bind NAD(+). The active-site Proton donor/acceptor is the H156. H157 contributes to the (S)-2,3,4,5-tetrahydrodipicolinate binding site. K160 serves as the catalytic Proton donor. A (S)-2,3,4,5-tetrahydrodipicolinate-binding site is contributed by 166 to 167 (GT).

The protein belongs to the DapB family.

It localises to the cytoplasm. The enzyme catalyses (S)-2,3,4,5-tetrahydrodipicolinate + NAD(+) + H2O = (2S,4S)-4-hydroxy-2,3,4,5-tetrahydrodipicolinate + NADH + H(+). It carries out the reaction (S)-2,3,4,5-tetrahydrodipicolinate + NADP(+) + H2O = (2S,4S)-4-hydroxy-2,3,4,5-tetrahydrodipicolinate + NADPH + H(+). The protein operates within amino-acid biosynthesis; L-lysine biosynthesis via DAP pathway; (S)-tetrahydrodipicolinate from L-aspartate: step 4/4. Catalyzes the conversion of 4-hydroxy-tetrahydrodipicolinate (HTPA) to tetrahydrodipicolinate. This is 4-hydroxy-tetrahydrodipicolinate reductase from Actinobacillus succinogenes (strain ATCC 55618 / DSM 22257 / CCUG 43843 / 130Z).